Consider the following 245-residue polypeptide: MIIPALDLIDGQVVRLHQGDYGQQRQYGSDPLPRLQDYQQQGAGVLHLVDLTGAKNPSARQIPLLTTLLAGVSVPVQIGGGIRTEQDVEALLKAGASRVVIGSTAVKQPELVQQWFTRYGAEALVLALDVRIDANGTKYVAISGWQENSDATLEQIVEQYLPFGLKHVLCTDISRDGTLSGSNVELYREISQRYPQIAFQASGGIGNLTDIANLRSSGVQGVIVGRALLEGKFNVAEAISCWQNG.

The Proton acceptor role is filled by Asp7. Asp129 (proton donor) is an active-site residue.

It belongs to the HisA/HisF family.

The protein localises to the cytoplasm. It carries out the reaction 1-(5-phospho-beta-D-ribosyl)-5-[(5-phospho-beta-D-ribosylamino)methylideneamino]imidazole-4-carboxamide = 5-[(5-phospho-1-deoxy-D-ribulos-1-ylimino)methylamino]-1-(5-phospho-beta-D-ribosyl)imidazole-4-carboxamide. The protein operates within amino-acid biosynthesis; L-histidine biosynthesis; L-histidine from 5-phospho-alpha-D-ribose 1-diphosphate: step 4/9. This chain is 1-(5-phosphoribosyl)-5-[(5-phosphoribosylamino)methylideneamino] imidazole-4-carboxamide isomerase, found in Pectobacterium atrosepticum (strain SCRI 1043 / ATCC BAA-672) (Erwinia carotovora subsp. atroseptica).